The primary structure comprises 359 residues: 3-dehydroshikimate dehydratase (359 aa).

This sequence belongs to the bacterial two-domain DSD family. As to quaternary structure, monomer.

It carries out the reaction 3-dehydroshikimate = 3,4-dihydroxybenzoate + H2O. It functions in the pathway aromatic compound metabolism; 3,4-dihydroxybenzoate biosynthesis; 3,4-dihydroxybenzoate from 3-dehydroquinate: step 2/2. Its activity is regulated as follows. Divalent cations such as Mg(2+), but also MO(2+), Mn(2+), Ba(2+), and Co(2+) activate the enzyme, whereas monovalent cations as K(+), Na(+), and NH4(+) decrease its activity slightly. 3-dehydroshikimate dehydratase; part of the qa gene cluster that mediates the catabolism of quinic acid (QA) and as such, allows the use of QA as a sole carbon source. Catalyzes the third reaction in the inducible quinic acid catabolic pathway by converting dehydroshikimate to protocatechuate. The qa cluster encodes 3 inducible enymes (qa-2, qa-3 and qa-4) catalyzing the first three reactions in the catabolism of quinic acid to protocatechuic acid (also known as 3,4-Dihydroxybenzoic acid). The sequence is that of 3-dehydroshikimate dehydratase from Neurospora crassa (strain ATCC 24698 / 74-OR23-1A / CBS 708.71 / DSM 1257 / FGSC 987).